We begin with the raw amino-acid sequence, 400 residues long: Large envelope protein (400 aa).

N-acetylmethionine is present on Met1. 2 disordered regions span residues 1–42 (MGGY…NNPD) and 84–118 (ILTT…SHPQ). A lipid anchor (N-myristoyl glycine; by host) is attached at Gly2. A pre-S1 region spans residues 2-119 (GGYSSKPRKG…PPLRDSHPQA (118 aa)). The tract at residues 2-174 (GGYSSKPRKG…FSRTGDPVPK (173 aa)) is pre-S. Residues 2 to 181 (GGYSSKPRKG…VPKMENTTSG (180 aa)) lie on the Virion surface; in external conformation side of the membrane. Over 2–253 (GGYSSKPRKG…PGYRWMCLRR (252 aa)) the chain is Intravirion; in internal conformation. N-linked (GlcNAc...) asparagine glycosylation occurs at Tyr4. The segment at 120 to 174 (MQWNSTTFHQALLDPRVRGLYFPAGGSSSGTANPVPTTASPISSIFSRTGDPVPK) is pre-S2. Residues 182-202 (FLGPLLVLQAGFFLLTRILTI) traverse the membrane as a helical segment. The Intravirion; in external conformation portion of the chain corresponds to 203–253 (PQSLDSWWTSLNFLGGAPACPGQNSQSPTSNHSPTSCPPICPGYRWMCLRR). A helical membrane pass occupies residues 254 to 274 (FIIFLFILLLCLIFLLVLLDY). The Virion surface portion of the chain corresponds to 275–348 (QGMLPVCPLI…WASVRFSWLS (74 aa)). Asn320 carries an N-linked (GlcNAc...) asparagine; by host glycan. The helical transmembrane segment at 349-369 (LLAPFVQWFVGLSPTVWLSVI) threads the bilayer. Over 370–375 (WMMWYW) the chain is Intravirion. Residues 376–398 (GPSLYNILSPFLPLLPIFFCLWV) traverse the membrane as a helical segment. Residues 399 to 400 (YI) lie on the Virion surface side of the membrane.

Belongs to the orthohepadnavirus major surface antigen family. In its internal form (Li-HBsAg), interacts with the capsid protein and with the isoform S. Interacts with host chaperone CANX. As to quaternary structure, associates with host chaperone CANX through its pre-S2 N glycan; this association may be essential for isoform M proper secretion. In terms of assembly, interacts with isoform L. Interacts with the antigens of satellite virus HDV (HDVAgs); this interaction is required for encapsidation of HDV genomic RNA. Isoform M is N-terminally acetylated by host at a ratio of 90%, and N-glycosylated by host at the pre-S2 region. In terms of processing, myristoylated.

The protein resides in the virion membrane. Functionally, the large envelope protein exists in two topological conformations, one which is termed 'external' or Le-HBsAg and the other 'internal' or Li-HBsAg. In its external conformation the protein attaches the virus to cell receptors and thereby initiating infection. This interaction determines the species specificity and liver tropism. This attachment induces virion internalization predominantly through caveolin-mediated endocytosis. The large envelope protein also assures fusion between virion membrane and endosomal membrane. In its internal conformation the protein plays a role in virion morphogenesis and mediates the contact with the nucleocapsid like a matrix protein. In terms of biological role, the middle envelope protein plays an important role in the budding of the virion. It is involved in the induction of budding in a nucleocapsid independent way. In this process the majority of envelope proteins bud to form subviral lipoprotein particles of 22 nm of diameter that do not contain a nucleocapsid. The sequence is that of Large envelope protein from Homo sapiens (Human).